Consider the following 325-residue polypeptide: Eukaryotic translation initiation factor 3 subunit I (325 aa).

WD repeat units lie at residues 8–47 (GHERSITQIKYNRDGDLLFTVAKDPVVNVWYSVNGERLGT), 50–89 (GHTGAVWCVDVDWDTRHVLSGSADNSCRLWDCETGKQLAL), 144–183 (CSESKITSAVWGPLGENIIAGHENGELNQYSAKSGEIVNS), 186–225 (EHSKQINDIQTSRDMTMFVTASKDCTSKLFDSTSLEHQKT), and 283–324 (GHFG…FEFE).

Belongs to the eIF-3 subunit I family. Component of the eukaryotic translation initiation factor 3 (eIF-3) complex, which is composed of 13 subunits: eif3a, eif3b, eif3c, eif3d, eif3e, eif3f, eif3g, eif3h, eif3i, eif3j, eif3k, eif3l and eif3m.

Its subcellular location is the cytoplasm. Functionally, component of the eukaryotic translation initiation factor 3 (eIF-3) complex, which is involved in protein synthesis of a specialized repertoire of mRNAs and, together with other initiation factors, stimulates binding of mRNA and methionyl-tRNAi to the 40S ribosome. The eIF-3 complex specifically targets and initiates translation of a subset of mRNAs involved in cell proliferation. In Xenopus tropicalis (Western clawed frog), this protein is Eukaryotic translation initiation factor 3 subunit I (eif3i).